We begin with the raw amino-acid sequence, 587 residues long: uncharacterized protein (587 aa).

A signal peptide spans 1-21; the sequence is MANRLLIYGLILWVSIIGSFA. At 22–541 the chain is on the lumenal side; it reads LDRNKTAQNA…LEKEVSFQRR (520 aa). Asparagine 25 carries N-linked (GlcNAc...) asparagine glycosylation. The disordered stretch occupies residues 44-108; the sequence is GSTTNVQKEH…RNPGDSSNSF (65 aa). Positions 63–90 are enriched in basic and acidic residues; that stretch reads RTHDFRQASKVDIRQADIRENGERKEQD. Polar residues predominate over residues 91–108; it reads ALTQPATPRNPGDSSNSF. One can recognise an SUN domain in the interval 163 to 331; sequence NEWSEREENQ…SLIKVYGKSM (169 aa). Asparagine 378, asparagine 381, asparagine 408, asparagine 448, and asparagine 486 each carry an N-linked (GlcNAc...) asparagine glycan. The chain crosses the membrane as a helical span at residues 542–562; that stretch reads IVYASFFAFVGLISYLLITRE. At 563 to 587 the chain is on the cytoplasmic side; that stretch reads LYFEDFEESKNGAIEKADIVQQAIR.

This sequence belongs to the SLP1 family. Interacts with EMP65.

It is found in the endoplasmic reticulum membrane. May be involved in membrane protein folding. Required for localization of MPS3 to the nuclear envelope. This is an uncharacterized protein from Saccharomyces cerevisiae (strain ATCC 204508 / S288c) (Baker's yeast).